A 342-amino-acid polypeptide reads, in one-letter code: Ribosomal RNA small subunit methyltransferase C (342 aa).

It belongs to the methyltransferase superfamily. RsmC family. As to quaternary structure, monomer.

It is found in the cytoplasm. It carries out the reaction guanosine(1207) in 16S rRNA + S-adenosyl-L-methionine = N(2)-methylguanosine(1207) in 16S rRNA + S-adenosyl-L-homocysteine + H(+). Its function is as follows. Specifically methylates the guanine in position 1207 of 16S rRNA in the 30S particle. The protein is Ribosomal RNA small subunit methyltransferase C of Shewanella oneidensis (strain ATCC 700550 / JCM 31522 / CIP 106686 / LMG 19005 / NCIMB 14063 / MR-1).